Here is a 139-residue protein sequence, read N- to C-terminus: Nucleoside diphosphate kinase (139 aa).

The ATP site is built by Lys-10, Phe-58, Arg-86, Thr-92, Arg-103, and Asn-113. His-116 acts as the Pros-phosphohistidine intermediate in catalysis.

This sequence belongs to the NDK family. Homotetramer. Mg(2+) serves as cofactor.

It localises to the cytoplasm. The enzyme catalyses a 2'-deoxyribonucleoside 5'-diphosphate + ATP = a 2'-deoxyribonucleoside 5'-triphosphate + ADP. It catalyses the reaction a ribonucleoside 5'-diphosphate + ATP = a ribonucleoside 5'-triphosphate + ADP. Major role in the synthesis of nucleoside triphosphates other than ATP. The ATP gamma phosphate is transferred to the NDP beta phosphate via a ping-pong mechanism, using a phosphorylated active-site intermediate. The sequence is that of Nucleoside diphosphate kinase from Caulobacter vibrioides (strain ATCC 19089 / CIP 103742 / CB 15) (Caulobacter crescentus).